A 109-amino-acid chain; its full sequence is Nucleoid-associated protein Bcer98_0019 (109 aa).

This sequence belongs to the YbaB/EbfC family. As to quaternary structure, homodimer.

The protein resides in the cytoplasm. It localises to the nucleoid. Functionally, binds to DNA and alters its conformation. May be involved in regulation of gene expression, nucleoid organization and DNA protection. This Bacillus cytotoxicus (strain DSM 22905 / CIP 110041 / 391-98 / NVH 391-98) protein is Nucleoid-associated protein Bcer98_0019.